The following is a 366-amino-acid chain: Quinolinate synthase (366 aa).

Iminosuccinate contacts are provided by histidine 44 and serine 61. Cysteine 108 is a binding site for [4Fe-4S] cluster. Residues 139-141 and serine 160 contribute to the iminosuccinate site; that span reads YIN. Cysteine 228 provides a ligand contact to [4Fe-4S] cluster. Iminosuccinate contacts are provided by residues 254 to 256 and threonine 271; that span reads HPE. Cysteine 318 is a binding site for [4Fe-4S] cluster.

The protein belongs to the quinolinate synthase family. Type 3 subfamily. Requires [4Fe-4S] cluster as cofactor.

Its subcellular location is the cytoplasm. It catalyses the reaction iminosuccinate + dihydroxyacetone phosphate = quinolinate + phosphate + 2 H2O + H(+). It participates in cofactor biosynthesis; NAD(+) biosynthesis; quinolinate from iminoaspartate: step 1/1. In terms of biological role, catalyzes the condensation of iminoaspartate with dihydroxyacetone phosphate to form quinolinate. This is Quinolinate synthase from Listeria monocytogenes serotype 4b (strain F2365).